The chain runs to 1068 residues: Tricorn protease homolog (1068 aa).

Positions 61 to 326 (MKAYYMYPDI…DSLTKLDINL (266 aa)) are six-bladed beta propeller. A seven-bladed beta propeller region spans residues 338 to 686 (VNVMEYMNEA…RKGGVIDLSR (349 aa)). The interval 692–762 (EPEKEWRQML…RTSHSYETAY (71 aa)) is C-1. The active-site Charge relay system is histidine 756. The tract at residues 771–864 (SVGGLGAEFE…RVTVKVLKDE (94 aa)) is PDZ-like. The segment at 865-1068 (RFLIYRYWVE…TAIELALKQL (204 aa)) is C-2. Glycine 927 lines the substrate pocket. Serine 974 serves as the catalytic Nucleophile. Catalysis depends on glutamate 1032, which acts as the Charge relay system.

The protein belongs to the peptidase S41B family.

It is found in the cytoplasm. Its function is as follows. Degrades oligopeptides in a sequential manner. The polypeptide is Tricorn protease homolog (tri) (Saccharolobus solfataricus (strain ATCC 35092 / DSM 1617 / JCM 11322 / P2) (Sulfolobus solfataricus)).